We begin with the raw amino-acid sequence, 131 residues long: Peptide methionine sulfoxide reductase MsrB (131 aa).

The MsrB domain maps to 8 to 130; it reads LEEWRAMLDP…NSVCLDLKPR (123 aa). Positions 47, 50, 96, and 99 each coordinate Zn(2+). The active-site Nucleophile is Cys-119.

Belongs to the MsrB Met sulfoxide reductase family. Requires Zn(2+) as cofactor.

It catalyses the reaction L-methionyl-[protein] + [thioredoxin]-disulfide + H2O = L-methionyl-(R)-S-oxide-[protein] + [thioredoxin]-dithiol. The chain is Peptide methionine sulfoxide reductase MsrB from Pseudomonas entomophila (strain L48).